Reading from the N-terminus, the 618-residue chain is Nuclear RNA export factor 1 (618 aa).

Over residues 1 to 15 the composition is skewed to basic and acidic residues; it reads MADEGKSYNEHDDRV. Positions 1–113 are disordered; sequence MADEGKSYNE…RGGAGTSQDG (113 aa). Ala-2 carries the N-acetylalanine modification. The tract at residues 2 to 59 is minor non-specific RNA-binding; it reads ADEGKSYNEHDDRVSFPQRRKKGRGPFRWKCGEGNRRSGRGGSGVQSSRFEEDDGDVA. The tract at residues 2–117 is RNA-binding (RBD); it reads ADEGKSYNEH…GTSQDGTTKN (116 aa). The tract at residues 2 to 197 is interaction with ALYREF/THOC4 and LUZP4; that stretch reads ADEGKSYNEH…IIINASAPPY (196 aa). The segment covering 19–28 has biased composition (basic residues); the sequence is QRRKKGRGPF. Residue Arg-41 is modified to Asymmetric dimethylarginine; alternate. Arg-41 bears the Omega-N-methylarginine; alternate mark. The segment at 60-117 is major non-specific RNA-binding; it reads MNDPQDGPRVRYNPYTNRPNRRGDGWHDRDRIHITVRRDRAPAERGGAGTSQDGTTKN. The RNA binding stretch occupies residues 60–117; that stretch reads MNDPQDGPRVRYNPYTNRPNRRGDGWHDRDRIHITVRRDRAPAERGGAGTSQDGTTKN. Positions 66–99 match the Nuclear localization signal motif; sequence GPRVRYNPYTNRPNRRGDGWHDRDRIHITVRRDR. The segment covering 80 to 102 has biased composition (basic and acidic residues); the sequence is RRGDGWHDRDRIHITVRRDRAPA. The Nuclear export signal signature appears at 82–109; the sequence is GDGWHDRDRIHITVRRDRAPAERGGAGT. The region spanning 118–197 is the RRM domain; the sequence is WFKITIPYGR…IIINASAPPY (80 aa). Tyr-125 is modified (3'-nitrotyrosine). LRR repeat units lie at residues 265–290, 291–314, 315–342, and 343–370; these read ELLSLNLSSNRLYKLDDMSSIVQKAP, NLKTLNLSGNELKTERELDKIKGL, KLEELWLDRNPMCDNFGDQSSYISAIRE, and RFPKLLRLDGHELPPPISFDVEAPTMLP. The 151-residue stretch at 385–535 folds into the NTF2 domain; sequence LVLRFLQQYY…LCIVNDELFV (151 aa). The TAP-C domain maps to 564–618; that stretch reads PEQQEMLQAFSTQSGMNLEWSQKCLQDNNWDYTRSAQAFTLLKAKGEIPEVAFMK.

The protein belongs to the NXF family. Heterodimer (via NTF2 domain) with NXT1. The formation of NXF1-NXT1 heterodimers is required for the NXF1-mediated nuclear mRNA export. Forms a complex with RANBP2/NUP358, NXT1 and RANGAP1. Associates with the exon junction complex (EJC). Associates with the transcription/export (TREX) complex. Found in a mRNA complex with UPF3A and UPF3B. Found in a post-splicing complex with RBM8A, UPF1, UPF2, UPF3A, UPF3B and RNPS1. Interacts (via N-terminus) with DHX9 (via N-terminus); this interaction is direct and negatively regulates NXF1-mediated nuclear export of constitutive transport element (CTE)-containing cellular mRNAs. Interacts with FYTTD1/UIF. Interacts with EIF4A3. Interacts with NUP42. Interacts with ALYREF/THOC4. Interacts with CHTOP. Interacts with FRG1 (via N-terminus). Interacts with LUZP4. Interacts with FMR1; the interaction occurs in a mRNA-dependent and polyribosomes-independent manner in the nucleus. Interacts with CPSF6 (via N-terminus); this interaction is direct. Interacts with RBM15. Interacts with RBM15B. Interacts with MCM3AP; this interaction is not mediated by RNA. Interacts with DDX3X (via C-terminus); this interaction may be partly involved in DDX3X nuclear export and in NXF1 localization to stress granules. Interacts with PABPC1/PABP1. In terms of tissue distribution, expressed ubiquitously.

It localises to the nucleus. Its subcellular location is the nucleoplasm. The protein localises to the nucleus speckle. The protein resides in the cytoplasm. It is found in the nuclear pore complex. It localises to the nucleus envelope. Its subcellular location is the stress granule. Functionally, involved in the nuclear export of mRNA species bearing retroviral constitutive transport elements (CTE) and in the export of mRNA from the nucleus to the cytoplasm (TAP/NFX1 pathway). The NXF1-NXT1 heterodimer is involved in the export of HSP70 mRNA in conjunction with ALYREF/THOC4 and THOC5 components of the TREX complex. ALYREF/THOC4-bound mRNA is thought to be transferred to the NXF1-NXT1 heterodimer for export. Also involved in nuclear export of m6A-containing mRNAs: interaction between SRSF3 and YTHDC1 facilitates m6A-containing mRNA-binding to both SRSF3 and NXF1, promoting mRNA nuclear export. This chain is Nuclear RNA export factor 1 (Nxf1), found in Mus musculus (Mouse).